The sequence spans 144 residues: Giant hemoglobin AIII chain (144 aa).

Residues 2 to 144 (ECGPLQRLKV…DVITGGIQGN (143 aa)) form the Globin domain. Residue His95 coordinates heme b.

This sequence belongs to the globin family. In terms of assembly, giant hemoglobin is composed of four heme-containing chains (AI to AIV), and two linker chains (AV and AVI).

The sequence is that of Giant hemoglobin AIII chain from Lamellibrachia sp. (Deep-sea giant tube worm).